The following is an 87-amino-acid chain: uncharacterized protein (87 aa).

Residues 52-87 are disordered; the sequence is KWQPRPDANNSDTTTSTEDSTTDTETEYSTTEDELA. The segment covering 71–87 has biased composition (acidic residues); the sequence is STTDTETEYSTTEDELA.

This is an uncharacterized protein from Autographa californica nuclear polyhedrosis virus (AcMNPV).